The primary structure comprises 151 residues: Large ribosomal subunit protein uL13 (151 aa).

The interval 129–151 (SNHPHQAQKPETLTINTIPGGNN) is disordered.

It belongs to the universal ribosomal protein uL13 family. As to quaternary structure, part of the 50S ribosomal subunit.

Functionally, this protein is one of the early assembly proteins of the 50S ribosomal subunit, although it is not seen to bind rRNA by itself. It is important during the early stages of 50S assembly. The protein is Large ribosomal subunit protein uL13 of Gloeothece citriformis (strain PCC 7424) (Cyanothece sp. (strain PCC 7424)).